Here is a 310-residue protein sequence, read N- to C-terminus: Proline-rich 28 kDa antigen (310 aa).

A signal peptide spans 1–32; it reads MIQIARTWRVFAGGMATGFIGVVLVTAGKASA. Positions 278-310 are disordered; the sequence is QAPAPAPGSAPVGLPGQAPGYPPAGTLTPVPPR.

It to M.leprae ML0031.

This is Proline-rich 28 kDa antigen (mtc28) from Mycobacterium bovis (strain ATCC BAA-935 / AF2122/97).